The primary structure comprises 344 residues: Protein RecA (344 aa).

Gly-65–Thr-72 contacts ATP.

It belongs to the RecA family.

The protein localises to the cytoplasm. Functionally, can catalyze the hydrolysis of ATP in the presence of single-stranded DNA, the ATP-dependent uptake of single-stranded DNA by duplex DNA, and the ATP-dependent hybridization of homologous single-stranded DNAs. It interacts with LexA causing its activation and leading to its autocatalytic cleavage. The protein is Protein RecA of Campylobacter lari.